The primary structure comprises 307 residues: Nicotinamide/nicotinic acid mononucleotide adenylyltransferase 2 (307 aa).

NAD(+)-binding residues include Ser16 and Phe17. His24 provides a ligand contact to ATP. NAD(+) contacts are provided by Trp92 and Thr95. Residues Cys164 and Cys165 are each lipidated (S-palmitoyl cysteine). Gly200, Asp202, Leu212, Trp213, and Arg232 together coordinate NAD(+). Residue Thr271–Arg274 coordinates ATP.

It belongs to the eukaryotic NMN adenylyltransferase family. As to quaternary structure, monomer. Mg(2+) is required as a cofactor. Degraded in response to injured neurite. Degradation is caused by polyubiquitination by MYCBP2 after recognition by FBXO45. In terms of processing, palmitoylated; palmitoylation is required for membrane association.

The protein localises to the golgi apparatus membrane. The protein resides in the cytoplasmic vesicle membrane. It localises to the cytoplasm. Its subcellular location is the cell projection. It is found in the axon. It catalyses the reaction beta-nicotinamide D-ribonucleotide + ATP + H(+) = diphosphate + NAD(+). The enzyme catalyses nicotinate beta-D-ribonucleotide + ATP + H(+) = deamido-NAD(+) + diphosphate. Its pathway is cofactor biosynthesis; NAD(+) biosynthesis; NAD(+) from nicotinamide D-ribonucleotide: step 1/1. It participates in cofactor biosynthesis; NAD(+) biosynthesis; deamido-NAD(+) from nicotinate D-ribonucleotide: step 1/1. Inhibited by P1-(adenosine-5')-P3-(nicotinamide-riboside-5')-triphosphate (Np3AD) and P1-(adenosine-5')-P4-(nicotinamide-riboside-5')-tetraphosphate (Np4AD). Nicotinamide/nicotinate-nucleotide adenylyltransferase that acts as an axon maintenance factor. Axon survival factor required for the maintenance of healthy axons: acts by delaying Wallerian axon degeneration, an evolutionarily conserved process that drives the loss of damaged axons. Catalyzes the formation of NAD(+) from nicotinamide mononucleotide (NMN) and ATP. Can also use the deamidated form; nicotinic acid mononucleotide (NaMN) as substrate but with a lower efficiency. Cannot use triazofurin monophosphate (TrMP) as substrate. Also catalyzes the reverse reaction, i.e. the pyrophosphorolytic cleavage of NAD(+). For the pyrophosphorolytic activity prefers NAD(+), NADH and NaAD as substrates and degrades nicotinic acid adenine dinucleotide phosphate (NHD) less effectively. Fails to cleave phosphorylated dinucleotides NADP(+), NADPH and NaADP(+). Also acts as an activator of ADP-ribosylation by supporting the catalytic activity of PARP16 and promoting mono-ADP-ribosylation of ribosomes by PARP16. May be involved in the maintenance of axonal integrity. The sequence is that of Nicotinamide/nicotinic acid mononucleotide adenylyltransferase 2 (NMNAT2) from Pongo abelii (Sumatran orangutan).